The primary structure comprises 292 residues: Thyroxine 5-deiodinase (292 aa).

Over valine 1 to threonine 30 the chain is Cytoplasmic. A helical; Signal-anchor for type II membrane protein transmembrane segment spans residues alanine 31–leucine 50. The Extracellular portion of the chain corresponds to aspartate 51 to valine 292. Residue selenocysteine 158 is part of the active site. Selenocysteine 158 is a non-standard amino acid (selenocysteine).

It belongs to the iodothyronine deiodinase family. In terms of assembly, monomer. Homodimer. May undergo minor heretodimerization with DIO1 and DIO2.

The protein resides in the cell membrane. It is found in the endosome membrane. It catalyses the reaction 3,3',5'-triiodo-L-thyronine + iodide + A + H(+) = L-thyroxine + AH2. The catalysed reaction is 3,3'-diiodo-L-thyronine + iodide + A + H(+) = 3,3',5-triiodo-L-thyronine + AH2. The enzyme catalyses 3-iodo-L-thyronine + iodide + A + H(+) = 3,5-diiodo-L-thyronine + AH2. It carries out the reaction L-thyronine + iodide + A + H(+) = 3-iodo-L-thyronine + AH2. It catalyses the reaction 3',5'-diiodo-L-thyronine + iodide + A + H(+) = 3,3',5'-triiodo-L-thyronine + AH2. The catalysed reaction is 3'-iodo-L-thyronine + iodide + A + H(+) = 3,3'-diiodo-L-thyronine + AH2. The enzyme catalyses 3,3',5'-triiodothyronamine + iodide + A + H(+) = 3,3',5,5'-tetraiodothyronamine + AH2. It carries out the reaction 3',5'-diiodothyronamine + iodide + A + H(+) = 3,3',5'-triiodothyronamine + AH2. It catalyses the reaction 3,3'-diiodothyronamine + iodide + A + H(+) = 3,3',5-triiodothyronamine + AH2. The catalysed reaction is 3-iodothyronamine + iodide + A + H(+) = 3,5-diiodothyronamine + AH2. The enzyme catalyses 3'-iodothyronamine + iodide + A + H(+) = 3,3'-diiodothyronamine + AH2. It carries out the reaction thyronamine + iodide + A + H(+) = 3-iodothyronamine + AH2. Its function is as follows. Plays a crucial role in the metabolism of thyroid hormones (TH) and has specific roles in TH activation and inactivation by deiodination.Catalyzes the deiodination of L-thyroxine (T4) to 3,3',5'-triiodothyronine (rT3), 3,5,3'-triiodothyronine (T3) to 3,3'-diiodothyronine (3,3'-T2), 3,5-diiodothyronine (3,5-T2) to 3-monoiodothyronine (3-T1), rT3 to 3',5'-diiodothyronine (3',5'-T2) and 3,3'-T2 to 3'-monoiodothyronine (3'-T1) via inner-ring deiodination (IRD). Catalyzes the deiodination of 3-T1 to L-thyronine (T0) via outer-ring deiodination (ORD). Catalyzes the tyrosyl ring deiodinations of 3,3',5,5'-tetraiodothyronamine, 3,3',5'-triiodothyronamine, 3,5,3'-triiodothyronamine, 3,5-diiodothyronamine, 3,3'-diiodothyronamine and 3-iodothyronamine. The chain is Thyroxine 5-deiodinase (DIO3) from Ovis aries (Sheep).